The primary structure comprises 301 residues: UDP-N-acetylenolpyruvoylglucosamine reductase 1 (301 aa).

The FAD-binding PCMH-type domain occupies lysine 29–glycine 196. Arginine 174 is an active-site residue. Catalysis depends on serine 225, which acts as the Proton donor. Glutamate 295 is a catalytic residue.

It belongs to the MurB family. It depends on FAD as a cofactor.

It is found in the cytoplasm. The enzyme catalyses UDP-N-acetyl-alpha-D-muramate + NADP(+) = UDP-N-acetyl-3-O-(1-carboxyvinyl)-alpha-D-glucosamine + NADPH + H(+). The protein operates within cell wall biogenesis; peptidoglycan biosynthesis. Cell wall formation. In Bacillus anthracis, this protein is UDP-N-acetylenolpyruvoylglucosamine reductase 1 (murB1).